A 308-amino-acid chain; its full sequence is Pantothenate kinase (308 aa).

An ATP-binding site is contributed by 93–100 (GSVAVGKS).

It belongs to the prokaryotic pantothenate kinase family.

It is found in the cytoplasm. It carries out the reaction (R)-pantothenate + ATP = (R)-4'-phosphopantothenate + ADP + H(+). Its pathway is cofactor biosynthesis; coenzyme A biosynthesis; CoA from (R)-pantothenate: step 1/5. This chain is Pantothenate kinase, found in Corynebacterium diphtheriae (strain ATCC 700971 / NCTC 13129 / Biotype gravis).